The sequence spans 377 residues: Succinyl-diaminopimelate desuccinylase (377 aa).

His-68 contacts Zn(2+). Residue Asp-70 is part of the active site. A Zn(2+)-binding site is contributed by Asp-101. Glu-135 acts as the Proton acceptor in catalysis. Positions 136, 164, and 350 each coordinate Zn(2+).

Belongs to the peptidase M20A family. DapE subfamily. As to quaternary structure, homodimer. Zn(2+) is required as a cofactor. It depends on Co(2+) as a cofactor.

It catalyses the reaction N-succinyl-(2S,6S)-2,6-diaminopimelate + H2O = (2S,6S)-2,6-diaminopimelate + succinate. Its pathway is amino-acid biosynthesis; L-lysine biosynthesis via DAP pathway; LL-2,6-diaminopimelate from (S)-tetrahydrodipicolinate (succinylase route): step 3/3. Its function is as follows. Catalyzes the hydrolysis of N-succinyl-L,L-diaminopimelic acid (SDAP), forming succinate and LL-2,6-diaminopimelate (DAP), an intermediate involved in the bacterial biosynthesis of lysine and meso-diaminopimelic acid, an essential component of bacterial cell walls. The polypeptide is Succinyl-diaminopimelate desuccinylase (Aliivibrio salmonicida (strain LFI1238) (Vibrio salmonicida (strain LFI1238))).